A 134-amino-acid polypeptide reads, in one-letter code: RxLR effector protein Avh238 (134 aa).

The N-terminal stretch at 1-21 is a signal peptide; sequence MRGVFFVAVAVAIFARSSAEA. The short motif at 44-68 is the RxLR-dEER element; sequence RFLRVADPEDDDLAAPADDGKTEER. A disordered region spans residues 49–70; it reads ADPEDDDLAAPADDGKTEERAP. Residues 61–70 are compositionally biased toward basic and acidic residues; it reads DDGKTEERAP.

This sequence belongs to the RxLR effector family. As to quaternary structure, interacts with host 1-aminocyclopropane-1-carboxylate synthases ACS1, ACS2, ACS3, ACS10 and ACS12.

Its subcellular location is the secreted. The protein resides in the host cytoplasm. It localises to the host nucleus. In terms of biological role, effector that suppresses plant defense responses during the early stages of pathogen infection. Suppresses cell death induced by effectors and PAMPs in plant hosts. Is able to induced cell death in tomato, tobacco, eggplant, and potato, but not in A.thaliana. Interacts with and destabilizes host 1-aminocyclopropane-1-carboxylate synthases. By suppressing type2 ACS-catalyzed ethylene biosynthesis, Avh238 facilitates Phytophthora infection. The chain is RxLR effector protein Avh238 (Avh238) from Phytophthora sojae (strain P6497) (Soybean stem and root rot agent).